Reading from the N-terminus, the 438-residue chain is Coenzyme A disulfide reductase (438 aa).

Residue 8-33 coordinates FAD; that stretch reads GAVAGGATCASQIRRLDKESDIIIFE. Residues Thr-15, Gln-19, Arg-22, Ser-39, and Asn-42 each contribute to the substrate site. Cys-43 functions as the Nucleophile in the catalytic mechanism. Residue Cys-43 is the Redox-active of the active site. Lys-71 contacts substrate. An NADP(+)-binding site is contributed by 151–166; the sequence is VLVVGAGYVSLEVLEN. Position 267–277 (267–277) interacts with FAD; it reads TNVPNIYAIGD. Residue His-299 participates in substrate binding. FAD is bound at residue Tyr-419. Lys-427 is a substrate binding site.

The protein belongs to the class-III pyridine nucleotide-disulfide oxidoreductase family. As to quaternary structure, homodimer. Requires FAD as cofactor.

It catalyses the reaction NADP(+) + 2 CoA = CoA-disulfide + NADPH + H(+). Functionally, catalyzes specifically the NADPH-dependent reduction of coenzyme A disulfide. Is also active with other disulfide substrates containing at least one 4'-phosphopantethienyl moiety such as 4,4'-diphosphopantethine, but is not able to reduce oxidized glutathione, cystine, pantethine, or H(2)O(2). The chain is Coenzyme A disulfide reductase (cdr) from Staphylococcus aureus (strain NCTC 8325 / PS 47).